The following is a 640-amino-acid chain: Threonine--tRNA ligase (640 aa).

Positions 1–61 (MPIITLPDGS…DRDATLQIIT (61 aa)) constitute a TGS domain. Residues 242 to 533 (DHRRIGKQLD…LIEHYAGAFP (292 aa)) are catalytic. Cys-333, His-384, and His-510 together coordinate Zn(2+).

The protein belongs to the class-II aminoacyl-tRNA synthetase family. Homodimer. Zn(2+) serves as cofactor.

Its subcellular location is the cytoplasm. The catalysed reaction is tRNA(Thr) + L-threonine + ATP = L-threonyl-tRNA(Thr) + AMP + diphosphate + H(+). In terms of biological role, catalyzes the attachment of threonine to tRNA(Thr) in a two-step reaction: L-threonine is first activated by ATP to form Thr-AMP and then transferred to the acceptor end of tRNA(Thr). Also edits incorrectly charged L-seryl-tRNA(Thr). The protein is Threonine--tRNA ligase of Pseudomonas aeruginosa (strain LESB58).